Reading from the N-terminus, the 357-residue chain is Peptide chain release factor 1 (357 aa).

Q232 is modified (N5-methylglutamine).

The protein belongs to the prokaryotic/mitochondrial release factor family. Methylated by PrmC. Methylation increases the termination efficiency of RF1.

The protein resides in the cytoplasm. Its function is as follows. Peptide chain release factor 1 directs the termination of translation in response to the peptide chain termination codons UAG and UAA. The chain is Peptide chain release factor 1 from Nitratidesulfovibrio vulgaris (strain ATCC 29579 / DSM 644 / CCUG 34227 / NCIMB 8303 / VKM B-1760 / Hildenborough) (Desulfovibrio vulgaris).